The sequence spans 86 residues: Small ribosomal subunit protein bS18c (86 aa).

This sequence belongs to the bacterial ribosomal protein bS18 family. Part of the 30S ribosomal subunit.

It is found in the plastid. It localises to the chloroplast. The protein is Small ribosomal subunit protein bS18c of Larix laricina (Tamarack).